The primary structure comprises 284 residues: MNAWNTIYDQFNPIAFSLGSIEVHWYGLAYACAIVTAFYMALRMIQKDPKRFPIERKEFESYFLWAELGIVLGARVGYILIYEPNSSYYLTHFWQIFNPFDSNGDFVGIRGMSYHGGLVGFLIASYLYSRKDLKKLLIYLDLIAISLPLGYVFGRIGNFLNQELVGRVVPKDSHLGQIIGIMVGNELRYPSQLIEAFLEGVIVFLMVLWAKKHTKTHGLLIVVYGLGYSLMRFIAEFYREPDSQMGVYFLNLSMGQILSLLMVIVSLGILLYATKNSKKIKGNQ.

The next 7 helical transmembrane spans lie at 14-34, 62-82, 106-126, 136-156, 190-210, 218-238, and 252-272; these read IAFS…ACAI, YFLW…ILIY, FVGI…IASY, LLIY…FGRI, PSQL…VLWA, GLLI…AEFY, and LSMG…ILLY. Position 155 (R155) interacts with a 1,2-diacyl-sn-glycero-3-phospho-(1'-sn-glycerol).

This sequence belongs to the Lgt family.

The protein localises to the cell inner membrane. It carries out the reaction L-cysteinyl-[prolipoprotein] + a 1,2-diacyl-sn-glycero-3-phospho-(1'-sn-glycerol) = an S-1,2-diacyl-sn-glyceryl-L-cysteinyl-[prolipoprotein] + sn-glycerol 1-phosphate + H(+). It participates in protein modification; lipoprotein biosynthesis (diacylglyceryl transfer). Functionally, catalyzes the transfer of the diacylglyceryl group from phosphatidylglycerol to the sulfhydryl group of the N-terminal cysteine of a prolipoprotein, the first step in the formation of mature lipoproteins. This chain is Phosphatidylglycerol--prolipoprotein diacylglyceryl transferase, found in Helicobacter pylori (strain Shi470).